Here is a 49-residue protein sequence, read N- to C-terminus: Peridinin-chlorophyll a-binding protein (49 aa).

In terms of assembly, monomer. Binds 12 peridinin and 2 chlorophyll a molecules per monomer.

The protein localises to the plastid. It is found in the chloroplast. In terms of biological role, water-soluble antenna for capture of solar energy in the blue-green range. Peridinin is an asymmetric carotenoid. The polypeptide is Peridinin-chlorophyll a-binding protein (Alexandrium cohorticula (Dinoflagellate)).